The following is a 159-amino-acid chain: uncharacterized protein (159 aa).

Positions 1 to 20 are cleaved as a signal peptide; it reads MKKIIAMSLLMFSVVMSVNA.

This is an uncharacterized protein from Pasteurella multocida (strain Pm70).